Reading from the N-terminus, the 146-residue chain is UPF0742 protein SPAC977.02 (146 aa).

Residues 38–60 traverse the membrane as a helical segment; sequence LTVKYCLAVKLLIYLLYCWYIYS.

The protein belongs to the UPF0742 family.

The protein localises to the cytoplasm. It localises to the nucleus membrane. The sequence is that of UPF0742 protein SPAC977.02 from Schizosaccharomyces pombe (strain 972 / ATCC 24843) (Fission yeast).